Reading from the N-terminus, the 249-residue chain is Long form salivary protein D7L (249 aa).

The N-terminal stretch at 1–19 (MNAVITSLVFISLVGVGYS) is a signal peptide. Disulfide bonds link Cys36-Cys66 and Cys62-Cys112. Trp49 lines the thromboxane A2 pocket. Trp52 is a leukotriene C4 binding site. Tyr63 serves as a coordination point for thromboxane A2. Positions 136 and 154 each coordinate leukotriene C4. Lys154 lines the thromboxane A2 pocket. 3 disulfides stabilise this stretch: Cys162-Cys178, Cys174-Cys221, and Cys211-Cys230.

This sequence belongs to the PBP/GOBP family.

It localises to the secreted. Its function is as follows. Modulates blood feeding of female sandflies on vertebrate species by binding and sequestering different mediators involved in the host response. Binds leukotriene C4, leukotriene D4, leukotriene E4 and U-46619, a stable analog of thromboxane A2. Does not bind histamine or serotonin. Inhibits platelet aggregation induced by low concentrations of collagen in thromboxane A2-dependent manner. The chain is Long form salivary protein D7L from Phlebotomus duboscqi (Sandfly).